Consider the following 133-residue polypeptide: Inhibitor of g-type lysozyme (133 aa).

An N-terminal signal peptide occupies residues 1–22 (MKIKSIRKAVLLLALLTSTSFA).

The protein localises to the periplasm. Its function is as follows. Inhibits activity of g-type lysozyme, which confers increased lysozyme tolerance to the bacterium. The chain is Inhibitor of g-type lysozyme (pliG) from Escherichia coli (strain K12).